Consider the following 246-residue polypeptide: uncharacterized protein (246 aa).

At serine 194 the chain carries Phosphoserine.

This is an uncharacterized protein from Schizosaccharomyces pombe (strain 972 / ATCC 24843) (Fission yeast).